The primary structure comprises 355 residues: Molybdenum import ATP-binding protein ModC (355 aa).

Positions 1–233 (MTLIVEAKQR…PSAAADRKEA (233 aa)) constitute an ABC transporter domain. Residue 31–38 (GRSGSGKT) participates in ATP binding. Residues 291-355 (GLSALNILEG…AIIKTVALEG (65 aa)) form the Mop domain.

Belongs to the ABC transporter superfamily. Molybdate importer (TC 3.A.1.8) family. As to quaternary structure, the complex is composed of two ATP-binding proteins (ModC), two transmembrane proteins (ModB) and a solute-binding protein (ModA).

It is found in the cell inner membrane. The catalysed reaction is molybdate(out) + ATP + H2O = molybdate(in) + ADP + phosphate + H(+). Functionally, part of the ABC transporter complex ModABC involved in molybdenum import. Responsible for energy coupling to the transport system. In Rhizobium etli (strain ATCC 51251 / DSM 11541 / JCM 21823 / NBRC 15573 / CFN 42), this protein is Molybdenum import ATP-binding protein ModC.